The sequence spans 136 residues: Small ribosomal subunit protein uS19 (136 aa).

The segment at 114–136 is disordered; the sequence is RSRVSHGSAGVGATRSSKFVPLK.

Belongs to the universal ribosomal protein uS19 family.

Protein S19 forms a complex with S13 that binds strongly to the 16S ribosomal RNA. This Methanosarcina barkeri (strain Fusaro / DSM 804) protein is Small ribosomal subunit protein uS19.